We begin with the raw amino-acid sequence, 243 residues long: UPF0758 protein SYNPCC7002_A0220 (243 aa).

The region spanning 112-235 (IIVDSPEAAA…FGSLRQKTAL (124 aa)) is the MPN domain. Zn(2+) contacts are provided by His-184, His-186, and Asp-197. The JAMM motif signature appears at 184–197 (HNHPSGNVDPSPED).

This sequence belongs to the UPF0758 family.

This chain is UPF0758 protein SYNPCC7002_A0220, found in Picosynechococcus sp. (strain ATCC 27264 / PCC 7002 / PR-6) (Agmenellum quadruplicatum).